The sequence spans 279 residues: Shikimate dehydrogenase (NADP(+)) (279 aa).

Shikimate is bound by residues 20–22 (SRS) and T67. K71 acts as the Proton acceptor in catalysis. D83 contacts NADP(+). 2 residues coordinate shikimate: N92 and D108. NADP(+) is bound by residues 134 to 138 (GAGGA) and L223. Residue Y225 coordinates shikimate. An NADP(+)-binding site is contributed by G246.

It belongs to the shikimate dehydrogenase family. Homodimer.

The catalysed reaction is shikimate + NADP(+) = 3-dehydroshikimate + NADPH + H(+). The protein operates within metabolic intermediate biosynthesis; chorismate biosynthesis; chorismate from D-erythrose 4-phosphate and phosphoenolpyruvate: step 4/7. Functionally, involved in the biosynthesis of the chorismate, which leads to the biosynthesis of aromatic amino acids. Catalyzes the reversible NADPH linked reduction of 3-dehydroshikimate (DHSA) to yield shikimate (SA). This chain is Shikimate dehydrogenase (NADP(+)), found in Cereibacter sphaeroides (strain ATCC 17029 / ATH 2.4.9) (Rhodobacter sphaeroides).